We begin with the raw amino-acid sequence, 371 residues long: tRNA-specific 2-thiouridylase MnmA (371 aa).

Residues 13–20 (GMSGGVDS) and M39 each bind ATP. The interaction with target base in tRNA stretch occupies residues 99 to 101 (NPD). The active-site Nucleophile is C104. C104 and C200 are joined by a disulfide. G128 contacts ATP. Positions 150–152 (KDQ) are interaction with tRNA. The active-site Cysteine persulfide intermediate is the C200. Residues 308-309 (RY) are interaction with tRNA.

This sequence belongs to the MnmA/TRMU family.

Its subcellular location is the cytoplasm. The catalysed reaction is S-sulfanyl-L-cysteinyl-[protein] + uridine(34) in tRNA + AH2 + ATP = 2-thiouridine(34) in tRNA + L-cysteinyl-[protein] + A + AMP + diphosphate + H(+). Functionally, catalyzes the 2-thiolation of uridine at the wobble position (U34) of tRNA, leading to the formation of s(2)U34. The sequence is that of tRNA-specific 2-thiouridylase MnmA from Listeria welshimeri serovar 6b (strain ATCC 35897 / DSM 20650 / CCUG 15529 / CIP 8149 / NCTC 11857 / SLCC 5334 / V8).